The following is a 234-amino-acid chain: Purine nucleoside phosphorylase DeoD-type (234 aa).

Histidine 5 serves as a coordination point for a purine D-ribonucleoside. Phosphate-binding positions include glycine 21, arginine 25, arginine 44, and 88–91 (RIGT). A purine D-ribonucleoside-binding positions include 180–182 (DME) and 204–205 (SD). The active-site Proton donor is aspartate 205.

The protein belongs to the PNP/UDP phosphorylase family. Homohexamer; trimer of homodimers.

It carries out the reaction a purine D-ribonucleoside + phosphate = a purine nucleobase + alpha-D-ribose 1-phosphate. The enzyme catalyses a purine 2'-deoxy-D-ribonucleoside + phosphate = a purine nucleobase + 2-deoxy-alpha-D-ribose 1-phosphate. Catalyzes the reversible phosphorolytic breakdown of the N-glycosidic bond in the beta-(deoxy)ribonucleoside molecules, with the formation of the corresponding free purine bases and pentose-1-phosphate. The chain is Purine nucleoside phosphorylase DeoD-type from Buchnera aphidicola subsp. Acyrthosiphon pisum (strain 5A).